The chain runs to 232 residues: Ubiquinone biosynthesis O-methyltransferase (232 aa).

Positions 36, 55, 76, and 120 each coordinate S-adenosyl-L-methionine.

The protein belongs to the methyltransferase superfamily. UbiG/COQ3 family.

The catalysed reaction is a 3-demethylubiquinol + S-adenosyl-L-methionine = a ubiquinol + S-adenosyl-L-homocysteine + H(+). The enzyme catalyses a 3-(all-trans-polyprenyl)benzene-1,2-diol + S-adenosyl-L-methionine = a 2-methoxy-6-(all-trans-polyprenyl)phenol + S-adenosyl-L-homocysteine + H(+). The protein operates within cofactor biosynthesis; ubiquinone biosynthesis. O-methyltransferase that catalyzes the 2 O-methylation steps in the ubiquinone biosynthetic pathway. The polypeptide is Ubiquinone biosynthesis O-methyltransferase (Pseudomonas paraeruginosa (strain DSM 24068 / PA7) (Pseudomonas aeruginosa (strain PA7))).